Consider the following 369-residue polypeptide: Bi-functional coumaroyl CoA and feruloyl CoA ortho-hydroxylase Diox2 (369 aa).

A Fe2OG dioxygenase domain is found at 215–318 (GSRRVNLNYY…RISVPLFVNP (104 aa)). Tyrosine 224 is a binding site for 2-oxoglutarate. The Fe cation site is built by histidine 239, aspartate 241, and histidine 299. 2-oxoglutarate is bound by residues arginine 309 and serine 311.

It belongs to the iron/ascorbate-dependent oxidoreductase family. L-ascorbate is required as a cofactor. Fe(2+) serves as cofactor.

The enzyme catalyses (E)-4-coumaroyl-CoA + 2-oxoglutarate + O2 = (E)-2,4-dihydroxycinnamoyl-CoA + succinate + CO2. The catalysed reaction is (E)-feruloyl-CoA + 2-oxoglutarate + O2 = (E)-6-hydroxyferuloyl-CoA + succinate + CO2. The protein operates within phenylpropanoid metabolism. Functionally, 2-oxoglutarate (OG)- and Fe(II)-dependent dioxygenase (2OGD) involved in scopoletin and umbelliferone biosynthesis. Converts feruloyl CoA into 6'-hydroxyferuloyl CoA, and p-coumaroyl CoA into 2,4-dihydroxycinnamoyl-CoA. This is Bi-functional coumaroyl CoA and feruloyl CoA ortho-hydroxylase Diox2 from Ruta graveolens (Common rue).